Here is a 404-residue protein sequence, read N- to C-terminus: MAQLVDELILRTFTNKMRYHGLGLRYNSYCNYVLYDTERSLADRIMDPPKSINRIPAQPIRTNIIKTGTRDVDRKELLKYSLELATEFDTARRVLLSSLMILSDREEKETKLINFNSKPGFVAIDESNGGMIMYGINNPMKSQTKIYIPLDENDDSSVHIGICFGNPKSEKILFYDVKENDPYDNPQSVYDRIEEIEEGSILEELFISKEDTDKQGDEDNDNEEEDADFFLKLKKDMYGLSGIQGYAYTNQDINYNVPTELLPLESVRHSKNIVLFSGVDMDNNYAVYALNIGKLVSSEGLKRRVWVAPWTKLLIGTEGELFTFEDKEKINVCEYDEIDGAWKVKRTLHVSVSDGVSNGISKLFTHKDIPIELLEEVITEAEKDVQENAIGRSQDEKGETNQET.

This is an uncharacterized protein from Ostreid herpesvirus 1 (isolate France) (OsHV-1).